The chain runs to 224 residues: UPF0758 protein HEAR2468 (224 aa).

Residues 102–224 (ALNSPQAVKQ…VYSFAEQGQL (123 aa)) enclose the MPN domain. 3 residues coordinate Zn(2+): histidine 173, histidine 175, and aspartate 186. The JAMM motif signature appears at 173–186 (HNHPSGTPEPSAAD).

Belongs to the UPF0758 family.

This is UPF0758 protein HEAR2468 from Herminiimonas arsenicoxydans.